A 155-amino-acid chain; its full sequence is Large ribosomal subunit protein eL24 (155 aa).

Over residues 93–123 (KRNARPETRNATRAKHAEAAKERKEKEAERR) the composition is skewed to basic and acidic residues. The segment at 93 to 155 (KRNARPETRN…SAPKVQATSR (63 aa)) is disordered.

The protein belongs to the eukaryotic ribosomal protein eL24 family.

The polypeptide is Large ribosomal subunit protein eL24 (RPL24) (Yarrowia lipolytica (strain CLIB 122 / E 150) (Yeast)).